Reading from the N-terminus, the 135-residue chain is Cofilin-4 (135 aa).

In terms of domain architecture, ADF-H spans 3–135 (SCASINDEVI…SQSLVEERCK (133 aa)).

It belongs to the actin-binding proteins ADF family.

It is found in the cytoplasm. The protein resides in the cytoskeleton. Functionally, controls actin polymerization and depolymerization. In Dictyostelium discoideum (Social amoeba), this protein is Cofilin-4 (cofE).